A 271-amino-acid chain; its full sequence is Formamidopyrimidine-DNA glycosylase (271 aa).

Catalysis depends on P2, which acts as the Schiff-base intermediate with DNA. E3 acts as the Proton donor in catalysis. Residue K57 is the Proton donor; for beta-elimination activity of the active site. H90, R109, and K150 together coordinate DNA. Residues 235 to 269 (LVYGNKDKPCPKCGGKIESLIIGQRNSFFCPKCQK) form an FPG-type zinc finger. R259 (proton donor; for delta-elimination activity) is an active-site residue.

The protein belongs to the FPG family. In terms of assembly, monomer. The cofactor is Zn(2+).

It carries out the reaction Hydrolysis of DNA containing ring-opened 7-methylguanine residues, releasing 2,6-diamino-4-hydroxy-5-(N-methyl)formamidopyrimidine.. The enzyme catalyses 2'-deoxyribonucleotide-(2'-deoxyribose 5'-phosphate)-2'-deoxyribonucleotide-DNA = a 3'-end 2'-deoxyribonucleotide-(2,3-dehydro-2,3-deoxyribose 5'-phosphate)-DNA + a 5'-end 5'-phospho-2'-deoxyribonucleoside-DNA + H(+). In terms of biological role, involved in base excision repair of DNA damaged by oxidation or by mutagenic agents. Acts as a DNA glycosylase that recognizes and removes damaged bases. Has a preference for oxidized purines, such as 7,8-dihydro-8-oxoguanine (8-oxoG). Has AP (apurinic/apyrimidinic) lyase activity and introduces nicks in the DNA strand. Cleaves the DNA backbone by beta-delta elimination to generate a single-strand break at the site of the removed base with both 3'- and 5'-phosphates. The sequence is that of Formamidopyrimidine-DNA glycosylase from Haemophilus influenzae (strain 86-028NP).